We begin with the raw amino-acid sequence, 358 residues long: NADH-quinone oxidoreductase subunit H (358 aa).

8 consecutive transmembrane segments (helical) span residues 20 to 40, 95 to 115, 128 to 148, 168 to 188, 206 to 226, 253 to 273, 290 to 310, and 334 to 354; these read ITVG…IPLI, ALFY…WAVI, IGLL…IIAG, ISYE…SGSM, VFSW…ISAV, GFAF…ISAL, WGFI…AVLY, and VLIP…ISPL.

The protein belongs to the complex I subunit 1 family. NDH-1 is composed of 14 different subunits. Subunits NuoA, H, J, K, L, M, N constitute the membrane sector of the complex.

It localises to the cell inner membrane. It carries out the reaction a quinone + NADH + 5 H(+)(in) = a quinol + NAD(+) + 4 H(+)(out). Its function is as follows. NDH-1 shuttles electrons from NADH, via FMN and iron-sulfur (Fe-S) centers, to quinones in the respiratory chain. The immediate electron acceptor for the enzyme in this species is believed to be ubiquinone. Couples the redox reaction to proton translocation (for every two electrons transferred, four hydrogen ions are translocated across the cytoplasmic membrane), and thus conserves the redox energy in a proton gradient. This subunit may bind ubiquinone. This chain is NADH-quinone oxidoreductase subunit H, found in Neisseria meningitidis serogroup A / serotype 4A (strain DSM 15465 / Z2491).